Here is a 670-residue protein sequence, read N- to C-terminus: Solute carrier organic anion transporter family member 1A6 (670 aa).

Topologically, residues 1–20 are cytoplasmic; that stretch reads MGEPGKRVGIHRVRCFAKIK. Residues 21–40 form a helical membrane-spanning segment; sequence VFLLALIWAYISKILSGVYM. Topologically, residues 41 to 59 are extracellular; it reads STMLTQLERQFNISTSIVG. A glycan (N-linked (GlcNAc...) asparagine) is linked at Asn52. A helical membrane pass occupies residues 60–80; that stretch reads LINGSFEMGNLLVIVFVSYFG. Residues 81–86 lie on the Cytoplasmic side of the membrane; sequence TKLHRP. Residues 87-111 form a helical membrane-spanning segment; sequence IMIGVGCAVMGLGCFIISLPHFLMG. The Extracellular segment spans residues 112 to 155; that stretch reads RYEYETTISPTSNLSSNSFLCVENRSQTLKPTQDPAECVKEIKS. N-linked (GlcNAc...) asparagine glycans are attached at residues Asn124 and Asn135. The helical transmembrane segment at 156-184 threads the bilayer; the sequence is LMWIYVLVGNIIRGIGETPIMPLGISYIE. The Cytoplasmic segment spans residues 185–203; it reads DFAKSENSPLYIGILEVGK. A helical membrane pass occupies residues 204–224; that stretch reads MIGPILGYLMGPFCANIYVDT. Residues 225–242 are Extracellular-facing; sequence GSVNTDDLTITPTDTRWV. A helical transmembrane segment spans residues 243-267; sequence GAWWIGFLVCAGVNVLTSIPFFFFP. Over 268-311 the chain is Cytoplasmic; sequence KTLPKEGLQDNGDGTENAKEEKHRDKAKEENQGIIKEFFLMMKN. The helical transmembrane segment at 312-333 threads the bilayer; it reads LFCNPIYMLCVLTSVLQVNGVA. Topologically, residues 334-353 are extracellular; that stretch reads NIVIYKPKYLEHHFGISTAK. Residues 354–377 form a helical membrane-spanning segment; it reads AVFLIGLYTTPSVSAGYLISGFIM. At 378-381 the chain is on the cytoplasmic side; sequence KKLK. Residues 382 to 405 form a helical membrane-spanning segment; the sequence is ITLKKAAIIALCLFMSECLLSLCN. The Extracellular segment spans residues 406–513; the sequence is FMLTCDTTPI…PDCANKLQYF (108 aa). Positions 433–488 constitute a Kazal-like domain; sequence NKFLSDCNTRCNCLTKTWDPVCGNNGLAYMSPCLAGCEKSVGTGANMVFQNCSCIR. Disulfide bonds link Cys439–Cys469, Cys445–Cys465, and Cys454–Cys486. Asn483 and Asn492 each carry an N-linked (GlcNAc...) asparagine glycan. Residues 514 to 536 traverse the membrane as a helical segment; that stretch reads LIITVFCCFFYSLATIPGYMVFL. Residues 537–545 are Cytoplasmic-facing; it reads RCMKSEEKS. A helical membrane pass occupies residues 546 to 571; that stretch reads LGIGLQAFFMRLFAGIPAPIYFGALI. The Extracellular segment spans residues 572–605; that stretch reads DRTCLHWGTLKCGEPGACRTYEVSSFRRLYLGLP. Residues 606–623 traverse the membrane as a helical segment; sequence AALRGSIILPSFFILRLI. At 624 to 670 the chain is on the cytoplasmic side; sequence RKLQIPGDTDSSEIELAETKPTEKESECTDMHKSSKVENDGELKTKL. Position 632 is a phosphothreonine (Thr632). The disordered stretch occupies residues 633–670; sequence DSSEIELAETKPTEKESECTDMHKSSKVENDGELKTKL. Residues Ser634 and Ser635 each carry the phosphoserine modification. The segment covering 640–670 has biased composition (basic and acidic residues); that stretch reads AETKPTEKESECTDMHKSSKVENDGELKTKL.

This sequence belongs to the organo anion transporter (TC 2.A.60) family. As to expression, kidney specific.

The protein resides in the cell membrane. Its function is as follows. May mediate the Na(+)-independent transport of organic anions. The polypeptide is Solute carrier organic anion transporter family member 1A6 (Slco1a6) (Mus musculus (Mouse)).